Here is a 124-residue protein sequence, read N- to C-terminus: Small ribosomal subunit protein uS13 (124 aa).

Residues G95–R124 are disordered. Residues G100–S109 show a composition bias toward polar residues. A compositionally biased stretch (basic residues) spans K111–R124.

This sequence belongs to the universal ribosomal protein uS13 family. Part of the 30S ribosomal subunit. Forms a loose heterodimer with protein S19. Forms two bridges to the 50S subunit in the 70S ribosome.

Located at the top of the head of the 30S subunit, it contacts several helices of the 16S rRNA. In the 70S ribosome it contacts the 23S rRNA (bridge B1a) and protein L5 of the 50S subunit (bridge B1b), connecting the 2 subunits; these bridges are implicated in subunit movement. Contacts the tRNAs in the A and P-sites. This is Small ribosomal subunit protein uS13 from Tropheryma whipplei (strain TW08/27) (Whipple's bacillus).